A 610-amino-acid polypeptide reads, in one-letter code: Oxidoreductase ptaE (610 aa).

Residues 1 to 20 form the signal peptide; sequence MFQSILFLAFYGRPVFGSAA. Plastocyanin-like domains lie at 67–181 and 191–344; these read QIIS…HGPS and PWLL…IVRY. N-linked (GlcNAc...) asparagine glycosylation is found at Asn105, Asn111, Asn262, Asn277, Asn330, Asn356, Asn401, Asn409, Asn427, and Asn602. One can recognise a Plastocyanin-like 3 domain in the interval 425-568; that stretch reads YVNWSEPSVK…IAIQFLEQPS (144 aa).

It belongs to the multicopper oxidase family.

Its pathway is secondary metabolite biosynthesis. In terms of biological role, oxidoreductase; part of the gene cluster that mediates the biosynthesis of pestheic acid, a diphenyl ether which is a biosynthetic precursor of the unique chloropupukeananes. The biosynthesis initiates from condensation of acetate and malonate units catalyzed by the non-reducing PKS ptaA. As the ptaA protein is TE/CLC domain-deficient, hydrolysis and Claisen cyclization of the polyketide could be catalyzed by ptaB containing a beta-lactamase domain. The ptaB protein might hydrolyze the thioester bond between the ACP of ptaA and the intermediate to release atrochrysone carboxylic acid, which is spontaneously dehydrated to form endocrocin anthrone. Endocrocin anthrone is then converted to endocrocin, catalyzed by the anthrone oxygenase ptaC. Spontaneous decarboxylation of endocrocin occurs to generate emodin. An O-methyltransferase (ptaH or ptaI) could methylate emodin to form physcion. PtaJ could then catalyze the oxidative cleavage of physcion, and rotation of the intermediate could then afford desmethylisosulochrin. PtaF, a putative NADH-dependent oxidoreductase, might also participate in the oxidative cleavage step. Desmethylisosulochrin is then transformed by another O-methyltransferase (ptaH or ptaI) to form isosulochrin. Chlorination of isosulochrin by ptaM in the cyclohexadienone B ring then produces chloroisosulochrin. PtaE is responsible for the oxidative coupling reactions of both benzophenones isosulouchrin and chloroisosulochrin to RES-1214-1 and pestheic acid respectively, regardless of chlorination. The polypeptide is Oxidoreductase ptaE (Pestalotiopsis fici (strain W106-1 / CGMCC3.15140)).